A 179-amino-acid polypeptide reads, in one-letter code: Large ribosomal subunit protein uL5 (179 aa).

It belongs to the universal ribosomal protein uL5 family. As to quaternary structure, part of the 50S ribosomal subunit; part of the 5S rRNA/L5/L18/L25 subcomplex. Contacts the 5S rRNA and the P site tRNA. Forms a bridge to the 30S subunit in the 70S ribosome.

In terms of biological role, this is one of the proteins that bind and probably mediate the attachment of the 5S RNA into the large ribosomal subunit, where it forms part of the central protuberance. In the 70S ribosome it contacts protein S13 of the 30S subunit (bridge B1b), connecting the 2 subunits; this bridge is implicated in subunit movement. Contacts the P site tRNA; the 5S rRNA and some of its associated proteins might help stabilize positioning of ribosome-bound tRNAs. The chain is Large ribosomal subunit protein uL5 from Vesicomyosocius okutanii subsp. Calyptogena okutanii (strain HA).